Reading from the N-terminus, the 297-residue chain is Bifunctional protein FolD (297 aa).

NADP(+)-binding positions include Gly-164–Ser-166, Ser-193, and Ile-234.

It belongs to the tetrahydrofolate dehydrogenase/cyclohydrolase family. As to quaternary structure, homodimer.

It carries out the reaction (6R)-5,10-methylene-5,6,7,8-tetrahydrofolate + NADP(+) = (6R)-5,10-methenyltetrahydrofolate + NADPH. It catalyses the reaction (6R)-5,10-methenyltetrahydrofolate + H2O = (6R)-10-formyltetrahydrofolate + H(+). It functions in the pathway one-carbon metabolism; tetrahydrofolate interconversion. Its function is as follows. Catalyzes the oxidation of 5,10-methylenetetrahydrofolate to 5,10-methenyltetrahydrofolate and then the hydrolysis of 5,10-methenyltetrahydrofolate to 10-formyltetrahydrofolate. In Halobacterium salinarum (strain ATCC 700922 / JCM 11081 / NRC-1) (Halobacterium halobium), this protein is Bifunctional protein FolD.